The primary structure comprises 305 residues: GMP synthase [glutamine-hydrolyzing] subunit B (305 aa).

In terms of domain architecture, GMPS ATP-PPase spans 2–185 (VETEEFIAEA…LGLEEVISER (184 aa)). Position 29–35 (29–35 (SGGVDSS)) interacts with ATP.

In terms of assembly, heterodimer composed of a glutamine amidotransferase subunit (A) and a GMP-binding subunit (B).

The enzyme catalyses XMP + L-glutamine + ATP + H2O = GMP + L-glutamate + AMP + diphosphate + 2 H(+). It functions in the pathway purine metabolism; GMP biosynthesis; GMP from XMP (L-Gln route): step 1/1. Functionally, catalyzes the synthesis of GMP from XMP. In Halorubrum lacusprofundi (strain ATCC 49239 / DSM 5036 / JCM 8891 / ACAM 34), this protein is GMP synthase [glutamine-hydrolyzing] subunit B.